The following is a 1157-amino-acid chain: DNA-directed RNA polymerase subunit beta (1157 aa).

Belongs to the RNA polymerase beta chain family. The RNAP catalytic core consists of 2 alpha, 1 beta, 1 beta' and 1 omega subunit. When a sigma factor is associated with the core the holoenzyme is formed, which can initiate transcription.

It catalyses the reaction RNA(n) + a ribonucleoside 5'-triphosphate = RNA(n+1) + diphosphate. Its function is as follows. DNA-dependent RNA polymerase catalyzes the transcription of DNA into RNA using the four ribonucleoside triphosphates as substrates. The sequence is that of DNA-directed RNA polymerase subunit beta from Tropheryma whipplei (Whipple's bacillus).